A 288-amino-acid polypeptide reads, in one-letter code: Solute carrier family 25 member 45 (288 aa).

Solcar repeat units lie at residues 1–83, 97–191, and 199–286; these read MPVE…TLLV, PSYM…LCRQ, and PSSA…LLRW. A run of 6 helical transmembrane segments spans residues 6–26, 63–83, 100–120, 166–186, 202–222, and 266–286; these read FVAG…FDTV, IASI…TLLV, MHIF…LAPF, GAWA…ITYE, ATVL…ATPL, and SARA…LLRW.

This sequence belongs to the mitochondrial carrier (TC 2.A.29) family.

The protein localises to the mitochondrion inner membrane. This is Solute carrier family 25 member 45 (SLC25A45) from Homo sapiens (Human).